Here is a 119-residue protein sequence, read N- to C-terminus: uncharacterized protein (119 aa).

The interval 55–119 is disordered; that stretch reads LSTEPPTPPS…SRLPPRSWTN (65 aa). The span at 81–92 shows a compositional bias: polar residues; it reads LSYTRCHSTTYT.

This is an uncharacterized protein from Saccharomyces cerevisiae (strain ATCC 204508 / S288c) (Baker's yeast).